Reading from the N-terminus, the 119-residue chain is NAD(P)H-quinone oxidoreductase subunit M (119 aa).

The protein belongs to the complex I NdhM subunit family. NDH-1 can be composed of about 15 different subunits; different subcomplexes with different compositions have been identified which probably have different functions.

The protein resides in the cellular thylakoid membrane. It catalyses the reaction a plastoquinone + NADH + (n+1) H(+)(in) = a plastoquinol + NAD(+) + n H(+)(out). The catalysed reaction is a plastoquinone + NADPH + (n+1) H(+)(in) = a plastoquinol + NADP(+) + n H(+)(out). Its function is as follows. NDH-1 shuttles electrons from an unknown electron donor, via FMN and iron-sulfur (Fe-S) centers, to quinones in the respiratory and/or the photosynthetic chain. The immediate electron acceptor for the enzyme in this species is believed to be plastoquinone. Couples the redox reaction to proton translocation, and thus conserves the redox energy in a proton gradient. Cyanobacterial NDH-1 also plays a role in inorganic carbon-concentration. This Picosynechococcus sp. (strain ATCC 27264 / PCC 7002 / PR-6) (Agmenellum quadruplicatum) protein is NAD(P)H-quinone oxidoreductase subunit M.